The sequence spans 576 residues: Carboxypeptidase S (576 aa).

At methionine 1–arginine 19 the chain is on the cytoplasmic side. A Glycyl lysine isopeptide (Lys-Gly) (interchain with G-Cter in ubiquitin) cross-link involves residue lysine 8. Residues alanine 20–leucine 40 form a helical membrane-spanning segment. Residues histidine 41–alanine 576 are Lumenal-facing. A disordered region spans residues proline 44–lysine 65. N-linked (GlcNAc...) asparagine glycosylation is present at asparagine 88. Histidine 168 lines the Zn(2+) pocket. Aspartate 170 is a catalytic residue. Residue asparagine 176 is glycosylated (N-linked (GlcNAc...) asparagine). Aspartate 205 contributes to the Zn(2+) binding site. Asparagine 228 is a glycosylation site (N-linked (GlcNAc...) asparagine). Catalysis depends on glutamate 239, which acts as the Proton acceptor. Residues glutamate 240 and aspartate 268 each contribute to the Zn(2+) site. 2 N-linked (GlcNAc...) asparagine glycosylation sites follow: asparagine 381 and asparagine 525. Residue histidine 547 participates in Zn(2+) binding.

The protein belongs to the peptidase M20A family. As to quaternary structure, yscS is synthesized as one polypeptide chain precursor which after carbohydrate modification in the secretory pathway yields two active precursor molecules. The proteolytically unprocessed forms are associated with the membrane, whereas the mature forms of the enzyme are soluble. It depends on Zn(2+) as a cofactor. Glycosylated. In terms of processing, ubiquitinated. Ubiquitination mediates sorting into internal vesicles in late endosomes. TUL1 is required for ubiquitination.

Its subcellular location is the vacuole membrane. It carries out the reaction Release of a C-terminal amino acid from a peptide in which glycine is the penultimate amino acid, e.g. Z-Gly-|-Leu.. Necessary for use of certain peptides as sole nitrogen source. May also cleave intracellularly generated peptides to recycle amino acids for protein synthesis. This Saccharomyces cerevisiae (strain ATCC 204508 / S288c) (Baker's yeast) protein is Carboxypeptidase S (CPS1).